The primary structure comprises 272 residues: Shikimate dehydrogenase (NADP(+)) (272 aa).

Residues 14–16 (SKS) and T61 contribute to the shikimate site. K65 (proton acceptor) is an active-site residue. Residue E77 participates in NADP(+) binding. Shikimate-binding residues include N86 and D102. NADP(+) is bound by residues 126–130 (GAGGA), 149–154 (NRTVSR), and M213. Y215 provides a ligand contact to shikimate. NADP(+) is bound at residue G237.

It belongs to the shikimate dehydrogenase family. As to quaternary structure, homodimer.

It carries out the reaction shikimate + NADP(+) = 3-dehydroshikimate + NADPH + H(+). The protein operates within metabolic intermediate biosynthesis; chorismate biosynthesis; chorismate from D-erythrose 4-phosphate and phosphoenolpyruvate: step 4/7. In terms of biological role, involved in the biosynthesis of the chorismate, which leads to the biosynthesis of aromatic amino acids. Catalyzes the reversible NADPH linked reduction of 3-dehydroshikimate (DHSA) to yield shikimate (SA). The polypeptide is Shikimate dehydrogenase (NADP(+)) (Shigella flexneri serotype 5b (strain 8401)).